The primary structure comprises 597 residues: Elongation factor 4 (597 aa).

In terms of domain architecture, tr-type G spans 2–184 (DHIRNFSIIA…ALIAKVPPPK (183 aa)). Residues 14-19 (DHGKST) and 131-134 (NKID) contribute to the GTP site.

The protein belongs to the TRAFAC class translation factor GTPase superfamily. Classic translation factor GTPase family. LepA subfamily.

It localises to the cell inner membrane. It carries out the reaction GTP + H2O = GDP + phosphate + H(+). In terms of biological role, required for accurate and efficient protein synthesis under certain stress conditions. May act as a fidelity factor of the translation reaction, by catalyzing a one-codon backward translocation of tRNAs on improperly translocated ribosomes. Back-translocation proceeds from a post-translocation (POST) complex to a pre-translocation (PRE) complex, thus giving elongation factor G a second chance to translocate the tRNAs correctly. Binds to ribosomes in a GTP-dependent manner. This chain is Elongation factor 4, found in Burkholderia vietnamiensis (strain G4 / LMG 22486) (Burkholderia cepacia (strain R1808)).